The primary structure comprises 228 residues: Potassium/proton antiporter CemA (228 aa).

Helical transmembrane passes span 6-26 (FIPL…SFSF), 113-133 (IICF…LFIL), and 188-208 (IISG…KYWI).

The protein belongs to the CemA family.

The protein resides in the plastid. Its subcellular location is the chloroplast inner membrane. It carries out the reaction K(+)(in) + H(+)(out) = K(+)(out) + H(+)(in). Its function is as follows. Contributes to K(+)/H(+) antiport activity by supporting proton efflux to control proton extrusion and homeostasis in chloroplasts in a light-dependent manner to modulate photosynthesis. Prevents excessive induction of non-photochemical quenching (NPQ) under continuous-light conditions. Indirectly promotes efficient inorganic carbon uptake into chloroplasts. The protein is Potassium/proton antiporter CemA of Populus alba (White poplar).